A 305-amino-acid polypeptide reads, in one-letter code: Hydrogen peroxide-inducible genes activator (305 aa).

An HTH lysR-type domain is found at 1–58; it reads MNIRDLEYLVALAEHRHFRRAADSCHVSQPTLSGQIRKLEDELGVMLLERTSRKVLFT. The segment at residues 18-37 is a DNA-binding region (H-T-H motif); it reads FRRAADSCHVSQPTLSGQIR. Disulfide bonds link Cys-180/Cys-259 and Cys-199/Cys-208. Residue Cys-199 is modified to Cysteine sulfenic acid (-SOH); alternate. Position 199 is an S-glutathionyl cysteine; alternate (Cys-199). Cys-199 carries the post-translational modification S-nitrosocysteine; alternate.

The protein belongs to the LysR transcriptional regulatory family. Homodimer and homotetramer. Oxidized on Cys-199; the Cys-SOH formed in response to oxidative signaling triggers a conformational change and the onset of transcriptional activity with a specific DNA-binding affinity. Cys-199-SOH rapidly reacts with Cys-208-SH to form a disulfide bond. In terms of processing, S-nitrosylation in response to nitrosative signaling triggers a conformational change and the onset of transcriptional activity with a specific DNA-binding affinity. Post-translationally, glutathionylation in response to redox signaling triggers the onset of transcriptional activity with a specific DNA-binding affinity.

With respect to regulation, activated by oxidation of Cys-199 resulting in the alternative formation of cystine, sulfenic acid, S-nitroso- or glutathione-bound cysteine. Hydrogen peroxide sensor. Activates the expression of a regulon of hydrogen peroxide-inducible genes such as katG, gor, ahpC, ahpF, oxyS (a regulatory RNA), dps, fur and grxA. OxyR expression is negatively autoregulated by binding to a 43 bp region upstream of its own coding sequence. OxyR is inactivated by reduction of its essential disulfide bond by the product of GrxA, itself positively regulated by OxyR. Also has a positive regulatory effect on the production of surface proteins that control the colony morphology and auto-aggregation ability. This is Hydrogen peroxide-inducible genes activator (oxyR) from Escherichia coli O157:H7.